We begin with the raw amino-acid sequence, 193 residues long: Hydroxyacylglutathione hydrolase-like protein (193 aa).

Positions 54, 56, 58, 59, and 110 each coordinate Zn(2+).

This sequence belongs to the metallo-beta-lactamase superfamily. Glyoxalase II family. It depends on Zn(2+) as a cofactor.

Its function is as follows. Hydrolase acting on ester bonds. The sequence is that of Hydroxyacylglutathione hydrolase-like protein (HAGHL) from Bos taurus (Bovine).